The chain runs to 551 residues: RCC1 and BTB domain-containing protein 2 (551 aa).

6 RCC1 repeats span residues 64–115 (NDEI…VLAT), 117–169 (DGEV…VLTS), 171–222 (GEVF…AVVD), 223–274 (TGEV…VLTD), 276–326 (GQIY…AAKT), and 328–382 (GGHV…TVAE). The BTB domain maps to 394–457 (ADLKFLVDGK…LYTDNISLSP (64 aa)).

Expressed in testis and heart (at protein level).

Its subcellular location is the cytoplasmic vesicle. It is found in the secretory vesicle. It localises to the acrosome. This is RCC1 and BTB domain-containing protein 2 (Rcbtb2) from Mus musculus (Mouse).